A 200-amino-acid polypeptide reads, in one-letter code: Rho-related protein racH (200 aa).

11 to 18 (GDMSVGKT) lines the GTP pocket. The Effector region signature appears at 33 to 41 (YVPTVFDNY). GTP is bound by residues 58–62 (DTAGS) and 117–120 (TKLD). The interval 178–200 (EELAKSKKDSKKGDKDSKDCIIQ) is disordered. Residue Cys197 is modified to Cysteine methyl ester. A lipid anchor (S-geranylgeranyl cysteine) is attached at Cys197. Positions 198 to 200 (IIQ) are cleaved as a propeptide — removed in mature form.

Belongs to the small GTPase superfamily. Rho family.

The protein resides in the cell membrane. This is Rho-related protein racH (racH) from Dictyostelium discoideum (Social amoeba).